The sequence spans 336 residues: tRNA-cytidine(32) 2-sulfurtransferase (336 aa).

A compositionally biased stretch (low complexity) spans 11 to 23 (TAAAPAGTGEATP). Residues 11 to 31 (TAAAPAGTGEATPVHARARSP) form a disordered region. Positions 75–80 (SGGKDS) match the PP-loop motif motif. Residues Cys150, Cys153, and Cys241 each coordinate [4Fe-4S] cluster.

This sequence belongs to the TtcA family. As to quaternary structure, homodimer. Mg(2+) serves as cofactor. It depends on [4Fe-4S] cluster as a cofactor.

It localises to the cytoplasm. It carries out the reaction cytidine(32) in tRNA + S-sulfanyl-L-cysteinyl-[cysteine desulfurase] + AH2 + ATP = 2-thiocytidine(32) in tRNA + L-cysteinyl-[cysteine desulfurase] + A + AMP + diphosphate + H(+). It functions in the pathway tRNA modification. Its function is as follows. Catalyzes the ATP-dependent 2-thiolation of cytidine in position 32 of tRNA, to form 2-thiocytidine (s(2)C32). The sulfur atoms are provided by the cysteine/cysteine desulfurase (IscS) system. The polypeptide is tRNA-cytidine(32) 2-sulfurtransferase (Paraburkholderia xenovorans (strain LB400)).